We begin with the raw amino-acid sequence, 77 residues long: uncharacterized protein (77 aa).

The region spanning 1-77 is the Peptidase A1 domain; sequence MAFERQGKIE…VAILDGKLVW (77 aa).

This is an uncharacterized protein from Saccharomyces cerevisiae (strain ATCC 204508 / S288c) (Baker's yeast).